Here is a 327-residue protein sequence, read N- to C-terminus: Phenylalanine--tRNA ligase alpha subunit (327 aa).

Position 252 (Glu252) interacts with Mg(2+).

This sequence belongs to the class-II aminoacyl-tRNA synthetase family. Phe-tRNA synthetase alpha subunit type 1 subfamily. In terms of assembly, tetramer of two alpha and two beta subunits. Requires Mg(2+) as cofactor.

It localises to the cytoplasm. It carries out the reaction tRNA(Phe) + L-phenylalanine + ATP = L-phenylalanyl-tRNA(Phe) + AMP + diphosphate + H(+). This is Phenylalanine--tRNA ligase alpha subunit from Klebsiella pneumoniae (strain 342).